A 61-amino-acid polypeptide reads, in one-letter code: Beta-insect depressant toxin BotIT5 (61 aa).

Residues 1–61 form the LCN-type CS-alpha/beta domain; sequence DGYIRKRDGC…TWKSETNTCG (61 aa). 4 cysteine pairs are disulfide-bonded: Cys10–Cys60, Cys14–Cys35, Cys21–Cys42, and Cys25–Cys44. Glycine amide is present on Gly61.

The protein belongs to the long (4 C-C) scorpion toxin superfamily. Sodium channel inhibitor family. Beta subfamily. Expressed by the venom gland.

Its subcellular location is the secreted. In terms of biological role, depressant insect beta-toxins cause a transient contraction paralysis followed by a slow flaccid paralysis. They bind voltage-independently at site-4 of sodium channels (Nav) and shift the voltage of activation toward more negative potentials thereby affecting sodium channel activation and promoting spontaneous and repetitive firing. This toxin is active only on insects. This Buthus occitanus tunetanus (Common European scorpion) protein is Beta-insect depressant toxin BotIT5.